Reading from the N-terminus, the 160-residue chain is MLSPKRTKFRKQHRGRMRGVASKGNTIAFGQFALQAQDCGWVTARQIEASRRAMTRYIKRGGQIWIRIFPDKPVTMRPAETRMGSGKGNPEFWVAVVKPGRILFEMGGDDITEEIAKEAMRLAQYKLPVKTKFISSDKNLEVSSQENTKNNKESQEEVKQ.

The span at 138–148 shows a compositional bias: polar residues; the sequence is KNLEVSSQENT. Residues 138-160 are disordered; sequence KNLEVSSQENTKNNKESQEEVKQ. Residues 149–160 show a composition bias toward basic and acidic residues; that stretch reads KNNKESQEEVKQ.

This sequence belongs to the universal ribosomal protein uL16 family. As to quaternary structure, part of the 50S ribosomal subunit.

Binds 23S rRNA and is also seen to make contacts with the A and possibly P site tRNAs. In Prochlorococcus marinus (strain MIT 9312), this protein is Large ribosomal subunit protein uL16.